The primary structure comprises 152 residues: 3-hydroxyacyl-[acyl-carrier-protein] dehydratase FabZ (152 aa).

Residue histidine 58 is part of the active site.

The protein belongs to the thioester dehydratase family. FabZ subfamily.

The protein resides in the cytoplasm. The catalysed reaction is a (3R)-hydroxyacyl-[ACP] = a (2E)-enoyl-[ACP] + H2O. Functionally, involved in unsaturated fatty acids biosynthesis. Catalyzes the dehydration of short chain beta-hydroxyacyl-ACPs and long chain saturated and unsaturated beta-hydroxyacyl-ACPs. This chain is 3-hydroxyacyl-[acyl-carrier-protein] dehydratase FabZ, found in Prochlorococcus marinus subsp. pastoris (strain CCMP1986 / NIES-2087 / MED4).